The chain runs to 616 residues: Chaperone protein HscA homolog (616 aa).

Belongs to the heat shock protein 70 family.

Chaperone involved in the maturation of iron-sulfur cluster-containing proteins. Has a low intrinsic ATPase activity which is markedly stimulated by HscB. This is Chaperone protein HscA homolog from Mannheimia succiniciproducens (strain KCTC 0769BP / MBEL55E).